A 180-amino-acid chain; its full sequence is ATP-dependent protease subunit HslV (180 aa).

Threonine 8 is an active-site residue. Na(+) contacts are provided by glycine 165, cysteine 168, and threonine 171.

It belongs to the peptidase T1B family. HslV subfamily. A double ring-shaped homohexamer of HslV is capped on each side by a ring-shaped HslU homohexamer. The assembly of the HslU/HslV complex is dependent on binding of ATP.

Its subcellular location is the cytoplasm. The enzyme catalyses ATP-dependent cleavage of peptide bonds with broad specificity.. Allosterically activated by HslU binding. Its function is as follows. Protease subunit of a proteasome-like degradation complex believed to be a general protein degrading machinery. The polypeptide is ATP-dependent protease subunit HslV (Halalkalibacterium halodurans (strain ATCC BAA-125 / DSM 18197 / FERM 7344 / JCM 9153 / C-125) (Bacillus halodurans)).